Here is a 632-residue protein sequence, read N- to C-terminus: Chaperone protein HtpG (632 aa).

The interval 1 to 339 is a; substrate-binding; that stretch reads MTQQTMSFQA…SSDLPLNVSR (339 aa). The tract at residues 340–559 is b; sequence EILQESRDVK…DNDMSGYLQR (220 aa). The c stretch occupies residues 560 to 632; sequence MLKAAGQSAP…TNALLLSRAA (73 aa).

It belongs to the heat shock protein 90 family. In terms of assembly, homodimer.

Its subcellular location is the cytoplasm. In terms of biological role, molecular chaperone. Has ATPase activity. The chain is Chaperone protein HtpG from Burkholderia pseudomallei (strain 668).